The chain runs to 491 residues: Protein nucleotidyltransferase YdiU (491 aa).

Residues glycine 94, glycine 96, arginine 97, lysine 117, aspartate 129, glycine 130, arginine 180, and arginine 187 each contribute to the ATP site. Aspartate 256 serves as the catalytic Proton acceptor. The Mg(2+) site is built by asparagine 257 and aspartate 266. Residue aspartate 266 participates in ATP binding.

It belongs to the SELO family. It depends on Mg(2+) as a cofactor. The cofactor is Mn(2+).

It carries out the reaction L-seryl-[protein] + ATP = 3-O-(5'-adenylyl)-L-seryl-[protein] + diphosphate. The enzyme catalyses L-threonyl-[protein] + ATP = 3-O-(5'-adenylyl)-L-threonyl-[protein] + diphosphate. The catalysed reaction is L-tyrosyl-[protein] + ATP = O-(5'-adenylyl)-L-tyrosyl-[protein] + diphosphate. It catalyses the reaction L-histidyl-[protein] + UTP = N(tele)-(5'-uridylyl)-L-histidyl-[protein] + diphosphate. It carries out the reaction L-seryl-[protein] + UTP = O-(5'-uridylyl)-L-seryl-[protein] + diphosphate. The enzyme catalyses L-tyrosyl-[protein] + UTP = O-(5'-uridylyl)-L-tyrosyl-[protein] + diphosphate. Functionally, nucleotidyltransferase involved in the post-translational modification of proteins. It can catalyze the addition of adenosine monophosphate (AMP) or uridine monophosphate (UMP) to a protein, resulting in modifications known as AMPylation and UMPylation. In Brevibacillus brevis (strain 47 / JCM 6285 / NBRC 100599), this protein is Protein nucleotidyltransferase YdiU.